Here is a 195-residue protein sequence, read N- to C-terminus: Protein GrpE (195 aa).

This sequence belongs to the GrpE family. Homodimer.

It is found in the cytoplasm. Participates actively in the response to hyperosmotic and heat shock by preventing the aggregation of stress-denatured proteins, in association with DnaK and GrpE. It is the nucleotide exchange factor for DnaK and may function as a thermosensor. Unfolded proteins bind initially to DnaJ; upon interaction with the DnaJ-bound protein, DnaK hydrolyzes its bound ATP, resulting in the formation of a stable complex. GrpE releases ADP from DnaK; ATP binding to DnaK triggers the release of the substrate protein, thus completing the reaction cycle. Several rounds of ATP-dependent interactions between DnaJ, DnaK and GrpE are required for fully efficient folding. This Francisella tularensis subsp. holarctica (strain FTNF002-00 / FTA) protein is Protein GrpE.